A 117-amino-acid polypeptide reads, in one-letter code: UPF0102 protein Rsph17025_0472 (117 aa).

This sequence belongs to the UPF0102 family.

The chain is UPF0102 protein Rsph17025_0472 from Cereibacter sphaeroides (strain ATCC 17025 / ATH 2.4.3) (Rhodobacter sphaeroides).